The chain runs to 300 residues: 4-hydroxy-tetrahydrodipicolinate synthase (300 aa).

Residue Thr-46 participates in pyruvate binding. Tyr-134 serves as the catalytic Proton donor/acceptor. Lys-162 acts as the Schiff-base intermediate with substrate in catalysis. Ile-207 contacts pyruvate.

The protein belongs to the DapA family. Homotetramer; dimer of dimers.

Its subcellular location is the cytoplasm. The enzyme catalyses L-aspartate 4-semialdehyde + pyruvate = (2S,4S)-4-hydroxy-2,3,4,5-tetrahydrodipicolinate + H2O + H(+). It participates in amino-acid biosynthesis; L-lysine biosynthesis via DAP pathway; (S)-tetrahydrodipicolinate from L-aspartate: step 3/4. Catalyzes the condensation of (S)-aspartate-beta-semialdehyde [(S)-ASA] and pyruvate to 4-hydroxy-tetrahydrodipicolinate (HTPA). The sequence is that of 4-hydroxy-tetrahydrodipicolinate synthase from Protochlamydia amoebophila (strain UWE25).